Reading from the N-terminus, the 505-residue chain is MNILRMDILSRGGTQEIEHRDGFFNTSFQYVLSACLASFIFGYQVSVLNTIKSYIVVEFEWCSTKTDTSCEDSILKSSFLLASVFIGAVLGSGFSGYLVKFGRRFSLMVIYIFFIFVSILTAISHHFHTILYARLLSGFGIGLITVSVPMYISEMTHKDKKGAYGVLHQLFITFGIFVAVLLGLFLGDGPKINGKSIELSNFEMFWWRFMFFLPTIISLLGIILLIAFYKEETPYFLYENGNIEGSKNILKKIYGPSDVDDALRAIKDAIDQNKAAKESSLSLLSALKIPAYRNVIILGCILSGFQQFTGINVLVANSNELYKEFLDKNLITILSVIMTAVNFLMTFPAIYIIEKIGRKTLLLGGCIGVICAFLPTVIARQVWGPTKIVNGLSIAGTFLMIISFAVSYGPVLWIYLHEMYPSEIKDSAASLASLINWVCAIIVVFPSDIIIKKSPSILFMFFSVMCIIAFLFIMFFIKETKGGEIGTSPYISLEERQKHIGKSKV.

The Cytoplasmic segment spans residues 1 to 27 (MNILRMDILSRGGTQEIEHRDGFFNTS). A helical transmembrane segment spans residues 28–48 (FQYVLSACLASFIFGYQVSVL). Topologically, residues 49–78 (NTIKSYIVVEFEWCSTKTDTSCEDSILKSS) are extracellular. A disulfide bond links cysteine 62 and cysteine 70. A helical transmembrane segment spans residues 79-99 (FLLASVFIGAVLGSGFSGYLV). Residues 100–104 (KFGRR) are Cytoplasmic-facing. Residues 105–125 (FSLMVIYIFFIFVSILTAISH) traverse the membrane as a helical segment. The Extracellular segment spans residues 126-134 (HFHTILYAR). A helical membrane pass occupies residues 135–155 (LLSGFGIGLITVSVPMYISEM). The Cytoplasmic segment spans residues 156–165 (THKDKKGAYG). A helical membrane pass occupies residues 166–186 (VLHQLFITFGIFVAVLLGLFL). Glutamine 169 serves as a coordination point for alpha-D-glucose. Glutamine 169 is a beta-D-glucose binding site. The Extracellular segment spans residues 187–208 (GDGPKINGKSIELSNFEMFWWR). The chain crosses the membrane as a helical span at residues 209–229 (FMFFLPTIISLLGIILLIAFY). The Cytoplasmic portion of the chain corresponds to 230-294 (KEETPYFLYE…SALKIPAYRN (65 aa)). The helical transmembrane segment at 295–315 (VIILGCILSGFQQFTGINVLV) threads the bilayer. Glutamine 306, glutamine 307, and asparagine 312 together coordinate alpha-D-glucose. Glutamine 306 lines the beta-D-glucose pocket. Asparagine 312 serves as a coordination point for beta-D-glucose. Over 316–332 (ANSNELYKEFLDKNLIT) the chain is Extracellular. The helical transmembrane segment at 333–353 (ILSVIMTAVNFLMTFPAIYII) threads the bilayer. Residue asparagine 342 participates in beta-D-glucose binding. Over 354 to 358 (EKIGR) the chain is Cytoplasmic. A helical transmembrane segment spans residues 359 to 379 (KTLLLGGCIGVICAFLPTVIA). The Extracellular segment spans residues 380–393 (RQVWGPTKIVNGLS). A helical transmembrane segment spans residues 394 to 414 (IAGTFLMIISFAVSYGPVLWI). Residue tryptophan 413 coordinates alpha-D-glucose. At 415 to 430 (YLHEMYPSEIKDSAAS) the chain is on the cytoplasmic side. Residues 431-451 (LASLINWVCAIIVVFPSDIII) form a helical membrane-spanning segment. Residues 452 to 456 (KKSPS) lie on the Extracellular side of the membrane. A helical transmembrane segment spans residues 457 to 477 (ILFMFFSVMCIIAFLFIMFFI). Over 478–505 (KETKGGEIGTSPYISLEERQKHIGKSKV) the chain is Cytoplasmic.

This sequence belongs to the major facilitator superfamily. Sugar transporter (TC 2.A.1.1) family. As to quaternary structure, homodimer.

The protein resides in the cell membrane. The enzyme catalyses D-glucose(out) = D-glucose(in). The catalysed reaction is D-fructose(out) = D-fructose(in). It carries out the reaction D-galactose(in) = D-galactose(out). It catalyses the reaction D-mannose(out) = D-mannose(in). The enzyme catalyses D-glucosamine(out) = D-glucosamine(in). The catalysed reaction is D-xylose(out) = D-xylose(in). With respect to regulation, inhibited by cytochalasin B. Functionally, sodium-independent facilitative hexose transporter. Can transport D-glucose and D-fructose. Can transport D-mannose, D-galactose, D-xylose and D-glucosamine. The chain is Hexose transporter 1 from Plasmodium yoelii yoelii.